The following is a 321-amino-acid chain: Glucokinase (321 aa).

Position 8-13 (Gly8–Thr13) interacts with ATP.

The protein belongs to the bacterial glucokinase family.

It is found in the cytoplasm. The catalysed reaction is D-glucose + ATP = D-glucose 6-phosphate + ADP + H(+). The polypeptide is Glucokinase (Psychromonas ingrahamii (strain DSM 17664 / CCUG 51855 / 37)).